Here is a 292-residue protein sequence, read N- to C-terminus: Glycine--tRNA ligase alpha subunit (292 aa).

This sequence belongs to the class-II aminoacyl-tRNA synthetase family. As to quaternary structure, tetramer of two alpha and two beta subunits.

The protein resides in the cytoplasm. It catalyses the reaction tRNA(Gly) + glycine + ATP = glycyl-tRNA(Gly) + AMP + diphosphate. The polypeptide is Glycine--tRNA ligase alpha subunit (Desulfovibrio desulfuricans (strain ATCC 27774 / DSM 6949 / MB)).